The sequence spans 184 residues: ESX-1 secretion-associated protein EspD (184 aa).

The segment at 33-56 (IGVGSAATPDTGPDLDNAHGQAET) is disordered.

Its subcellular location is the secreted. Functionally, required for ESX-1 function. Required for the maintenance of adequate cellular levels of both EspA and EspC. Facilitates EsxA secretion. This chain is ESX-1 secretion-associated protein EspD, found in Mycobacterium tuberculosis (strain CDC 1551 / Oshkosh).